Consider the following 347-residue polypeptide: Holliday junction branch migration complex subunit RuvB (347 aa).

Positions 1 to 183 (MSDERVVTPR…FGSVHRLEFY (183 aa)) are large ATPase domain (RuvB-L). ATP contacts are provided by residues L22, R23, G64, K67, T68, S69, 130-132 (EDF), R173, Y183, and R220. Position 68 (T68) interacts with Mg(2+). Positions 184-254 (SVDALYEIVM…VARDALAKLE (71 aa)) are small ATPAse domain (RuvB-S). The tract at residues 257–347 (HLGLDENDRR…NGAEQGRLWT (91 aa)) is head domain (RuvB-H). R312 and R317 together coordinate DNA.

This sequence belongs to the RuvB family. In terms of assembly, homohexamer. Forms an RuvA(8)-RuvB(12)-Holliday junction (HJ) complex. HJ DNA is sandwiched between 2 RuvA tetramers; dsDNA enters through RuvA and exits via RuvB. An RuvB hexamer assembles on each DNA strand where it exits the tetramer. Each RuvB hexamer is contacted by two RuvA subunits (via domain III) on 2 adjacent RuvB subunits; this complex drives branch migration. In the full resolvosome a probable DNA-RuvA(4)-RuvB(12)-RuvC(2) complex forms which resolves the HJ.

The protein localises to the cytoplasm. The enzyme catalyses ATP + H2O = ADP + phosphate + H(+). In terms of biological role, the RuvA-RuvB-RuvC complex processes Holliday junction (HJ) DNA during genetic recombination and DNA repair, while the RuvA-RuvB complex plays an important role in the rescue of blocked DNA replication forks via replication fork reversal (RFR). RuvA specifically binds to HJ cruciform DNA, conferring on it an open structure. The RuvB hexamer acts as an ATP-dependent pump, pulling dsDNA into and through the RuvAB complex. RuvB forms 2 homohexamers on either side of HJ DNA bound by 1 or 2 RuvA tetramers; 4 subunits per hexamer contact DNA at a time. Coordinated motions by a converter formed by DNA-disengaged RuvB subunits stimulates ATP hydrolysis and nucleotide exchange. Immobilization of the converter enables RuvB to convert the ATP-contained energy into a lever motion, pulling 2 nucleotides of DNA out of the RuvA tetramer per ATP hydrolyzed, thus driving DNA branch migration. The RuvB motors rotate together with the DNA substrate, which together with the progressing nucleotide cycle form the mechanistic basis for DNA recombination by continuous HJ branch migration. Branch migration allows RuvC to scan DNA until it finds its consensus sequence, where it cleaves and resolves cruciform DNA. In Roseiflexus castenholzii (strain DSM 13941 / HLO8), this protein is Holliday junction branch migration complex subunit RuvB.